Reading from the N-terminus, the 928-residue chain is Nitrogen network kinase 1 (928 aa).

The span at 1–12 (MFTSQRQLRQNG) shows a compositional bias: polar residues. 2 disordered regions span residues 1 to 43 (MFTS…SYGR) and 81 to 118 (HEHPSRSTLVQLQTRSQPDDVASSQVNPEGGTDDLELG). Low complexity predominate over residues 13-29 (SPMSSSRSSQHSSGTAS). 2 stretches are compositionally biased toward polar residues: residues 30–40 (PISDSPASNRS) and 86–107 (RSTLVQLQTRSQPDDVASSQVN). Ser-178 and Ser-179 each carry phosphoserine. A disordered region spans residues 374 to 394 (ANDDNINSRNTPNNSNDTYVN). The span at 375 to 391 (NDDNINSRNTPNNSNDT) shows a compositional bias: low complexity. A phosphoserine mark is found at Ser-405 and Ser-426. A Protein kinase domain is found at 449-912 (HRLGKIIGFG…WKLKRIEEVL (464 aa)). ATP contacts are provided by residues 455 to 463 (IGFGAWGII) and Lys-478. Asp-580 functions as the Proton acceptor in the catalytic mechanism. Disordered regions lie at residues 670–741 (ENRK…KYIG) and 767–813 (YDSP…SGSS). The segment covering 683-696 (VSSSSHSLKHLNQP) has biased composition (polar residues). The residue at position 737 (Ser-737) is a Phosphoserine. Tyr-739 is subject to Phosphotyrosine. A compositionally biased stretch (low complexity) spans 769 to 813 (SPDSSQSEISAASSSSSNLSSLSSSTKASAVTNSGVTTSSPSGSS).

Belongs to the protein kinase superfamily. Ser/Thr protein kinase family. In terms of assembly, interacts with URE2 and GDH2. Also interacts with the TORC1 kinase complex.

Its subcellular location is the cytoplasm. The catalysed reaction is L-seryl-[protein] + ATP = O-phospho-L-seryl-[protein] + ADP + H(+). It catalyses the reaction L-threonyl-[protein] + ATP = O-phospho-L-threonyl-[protein] + ADP + H(+). Its function is as follows. Serine/threonine-protein kinase involved in the phosphorylation of the NAD(+)-dependent glutamate dehydrogenase GDH2. When overexpressed, confers hypersensitivity to rapamycin and induces rapid nuclear accumulation of GLN3 to activate the transcription of nitrogen-regulated genes. This is Nitrogen network kinase 1 (NNK1) from Saccharomyces cerevisiae (strain ATCC 204508 / S288c) (Baker's yeast).